A 690-amino-acid chain; its full sequence is Calpain-9 (690 aa).

The disordered stretch occupies residues Met1–Ser24. One can recognise a Calpain catalytic domain in the interval Leu42–Thr337. Residues Leu81, Gly83, and Asp88 each contribute to the Ca(2+) site. Cys97 is a catalytic residue. Ca(2+) is bound at residue Glu167. Catalysis depends on residues His254 and Asn278. The Ca(2+) site is built by Glu284, Asp291, Leu312, Asp314, and Glu316. Residues Pro338–Arg521 are domain III. Residues Gln522–Ile690 are domain IV. EF-hand domains are found at residues Asp534–Lys552, Leu561–Phe589, and Asp591–Gln626. Residues Asp574, Ser576, Asn578, Lys580, Glu585, Asp604, Asp606, Ser608, Thr610, and Glu615 each coordinate Ca(2+).

Belongs to the peptidase C2 family. In terms of tissue distribution, predominantly expressed in stomach and small intestine, although low levels of expression in other organs.

Calcium-regulated non-lysosomal thiol-protease. The protein is Calpain-9 (Capn9) of Rattus norvegicus (Rat).